A 148-amino-acid chain; its full sequence is UPF0178 protein Mlg_1612 (148 aa).

It belongs to the UPF0178 family.

This chain is UPF0178 protein Mlg_1612, found in Alkalilimnicola ehrlichii (strain ATCC BAA-1101 / DSM 17681 / MLHE-1).